A 1113-amino-acid polypeptide reads, in one-letter code: Nucleoporin NUP116/NSP116 (1113 aa).

Residues 1 to 35 are disordered; the sequence is MFGVSRGAFPSATTQPFGSTGSTFGGQQQQQQPVA. 4 FG repeats span residues 2–3, 17–18, 24–25, and 40–41; these read FG. Low complexity predominate over residues 13 to 33; sequence TTQPFGSTGSTFGGQQQQQQP. The segment at 49-91 is disordered; that stretch reads TQAPAFGNFGNQTSNSPFGMSGSTTANGTPFGQSQLTNNNASG. Residues 55–58 form a GLFG 1; approximate repeat; it reads GNFG. FG repeat units follow at residues 66–67, 79–80, and 94–95; these read FG. Residues 92–172 are interaction with AFG2; it reads SIFGGMGNNT…AGRKFGTSQN (81 aa). The segment at 110 to 166 is GLE2 binding sequence (GLEBS); that stretch reads VVPNSTAGTSIKPFTTFEEKDPTTGVINVFQSITCMPEYRNFSFEELRFQDYQAGRK. The tract at residues 160 to 362 is interaction with MEX67, not KAP95; it reads DYQAGRKFGT…AKPASGGLFG (203 aa). FG repeat units lie at residues 167–168 and 189–190; these read FG. A GLFG 2 repeat occupies 205–208; sequence GLFG. The stretch at 214–217 is one GLFG 3; approximate repeat; sequence GMFG. The GLFG 4; approximate repeat unit spans residues 224 to 227; the sequence is GGFG. Residues 235-238 form a GLFG 5 repeat; sequence GLFG. An FG 10 repeat occupies 249 to 250; sequence FG. 3 GLFG repeats span residues 259–262, 276–279, and 288–291; these read GLFG. The segment covering 265–279 has biased composition (low complexity); it reads TNNPTNGTNNTGLFG. The disordered stretch occupies residues 265-341; sequence TNNPTNGTNN…SNANANGGAF (77 aa). Polar residues predominate over residues 280–304; sequence QQNSNTNGGLFGQQQNSFGANNVSN. One copy of the FG 11 repeat lies at 297–298; it reads FG. A GLFG 9; approximate repeat occupies 306-309; that stretch reads GAFG. Residues 327–330 form a GLFG 10; approximate repeat; it reads GIFG. The span at 330–341 shows a compositional bias: low complexity; it reads GQSNANANGGAF. One copy of the GLFG 11; approximate repeat lies at 339-342; that stretch reads GAFG. An FG 12 repeat occupies 351 to 352; sequence FG. The GLFG 12 repeat unit spans residues 359–362; the sequence is GLFG. The tract at residues 362 to 535 is sufficient for interaction with MEX67 and KAP95; sequence GQSAGSKAFG…GAKPTGFGNT (174 aa). One copy of the FG 13 repeat lies at 370 to 371; sequence FG. The tract at residues 371–606 is disordered; the sequence is GMNTNPTGTT…NPASTSGGLF (236 aa). GLFG repeat units lie at residues 382–385, 395–398, 407–410, and 420–423; these read GLFG. A compositionally biased stretch (low complexity) spans 410 to 438; the sequence is GQNNQSQNQSGLFGQQNSSNAFGQPQQQG. The stretch at 431-432 is one FG 14 repeat; it reads FG. GLFG repeat units lie at residues 439 to 442 and 448 to 451; these read GLFG. Polar residues predominate over residues 451–464; that stretch reads GQQQGASTFASGNA. 2 stretches are compositionally biased toward low complexity: residues 465-478 and 485-522; these read QNNS…QQQQ and GQQN…QQNN. The FG 15 repeat unit spans residues 470–471; that stretch reads FG. GLFG repeat units lie at residues 482-485 and 497-500; these read GLFG. 3 FG repeats span residues 510-511, 525-526, and 532-533; these read FG. Residues 532–569 show a composition bias toward polar residues; sequence FGNTSLFSNSTTNQSNGISGNNLQQQSGGLFQNKQQPA. The interval 536–732 is interaction with KAP95, not MEX67; that stretch reads SLFSNSTTNQ…QSQNALQQQQ (197 aa). GLFG repeat units lie at residues 572 to 575, 585 to 588, and 604 to 607; these read GLFG. The segment covering 588 to 603 has biased composition (polar residues); that stretch reads GNNQVANQNNPASTSG. The stretch at 616–617 is one FG 19 repeat; sequence FG. The stretch at 630–633 is one GLFG 24; approximate repeat; it reads GIFG. GLFG repeat units lie at residues 648–651, 665–668, and 683–686; these read GLFG. Positions 678-691 are enriched in low complexity; the sequence is SNGSTGLFGSNNTS. Disordered regions lie at residues 678–736 and 868–939; these read SNGS…QQQR and SEEK…ENVA. Polar residues predominate over residues 692–708; that stretch reads QSTNAGGLFQNNTSTNT. Residues 719–736 show a composition bias toward low complexity; sequence QSMAQSQNALQQQQQQQR. A Phosphoserine modification is found at Ser886. Basic and acidic residues predominate over residues 916 to 939; it reads NDGEDSATKHHSRNMDEENKENVA. Positions 967 to 1109 constitute a Peptidase S59 domain; that stretch reads NENYYISPSL…GTYVFIVNHA (143 aa). Residues 967-1113 are interaction with NUP82 NPC subcomplex; the sequence is NENYYISPSL…FIVNHAAEQT (147 aa). The segment at 969–1108 is nucleoporin RNA-binding motif (NRM); sequence NYYISPSLDT…SGTYVFIVNH (140 aa).

The protein belongs to the nucleoporin GLFG family. In terms of assembly, component of the nuclear pore complex (NPC). NPC constitutes the exclusive means of nucleocytoplasmic transport. NPCs allow the passive diffusion of ions and small molecules and the active, nuclear transport receptor-mediated bidirectional transport of macromolecules such as proteins, RNAs, ribonucleoparticles (RNPs), and ribosomal subunits across the nuclear envelope. Due to its 8-fold rotational symmetry, all subunits are present with 8 copies or multiples thereof. NUP116 interacts with the NUP82 subcomplex and GLE2. Through its FG repeats it interacts with numerous karyopherins including KAP95, PSE1 (GSP1-GDP dependent), MEX67, and to homomeric RNA. Interacts with CEX1. Interacts (via N-terminus) with AFG2 (via N-terminus).

It localises to the nucleus. Its subcellular location is the nuclear pore complex. The protein resides in the nucleus membrane. Functions as a component of the nuclear pore complex (NPC). NPC components, collectively referred to as nucleoporins (NUPs), can play the role of both NPC structural components and of docking or interaction partners for transiently associated nuclear transport factors. Active directional transport is assured by both, a Phe-Gly (FG) repeat affinity gradient for these transport factors across the NPC and a transport cofactor concentration gradient across the nuclear envelope (GSP1 and GSP2 GTPases associated predominantly with GTP in the nucleus, with GDP in the cytoplasm). Plays an important role in several nuclear export and import pathways including poly(A)+ RNA, tRNA, pre-ribosome, and protein transport. By binding ATPase AFG2, promotes AFG2-mediated release of shuttling protein RLP24 from pre-60S ribosomal particles. This is Nucleoporin NUP116/NSP116 (NUP116) from Saccharomyces cerevisiae (strain ATCC 204508 / S288c) (Baker's yeast).